The following is a 397-amino-acid chain: Cercosporin biosynthesis regulatory protein CTB8 (397 aa).

The zn(2)-C6 fungal-type DNA-binding region spans 26-53 (CTHCSSQKIRCTKERPACARCVNKGLLC). Disordered stretches follow at residues 62–92 (GTRRHSVRATPEPETTISNAPTSSVPPDSVK) and 173–198 (AEASTRPSSSSSPPSQRSDGGRATTH). Over residues 74–87 (PETTISNAPTSSVP) the composition is skewed to polar residues. Residues 179 to 197 (PSSSSSPPSQRSDGGRATT) show a composition bias toward low complexity.

It localises to the nucleus. In terms of biological role, transcription regulator of the gene cluster that mediates the biosynthesis of cercosporin, a light-activated, non-host-selective toxin. The perylenequinone chromophore of cercosporin absorbs light energy to attain an electronically-activated triplet state and produces active oxygen species such as the hydroxyl radical, superoxide, hydrogen peroxide or singlet oxygen upon reaction with oxygen molecules. These reactive oxygen species cause damage to various cellular components including lipids, proteins and nucleic acids. This chain is Cercosporin biosynthesis regulatory protein CTB8, found in Cercospora nicotianae (Barn spot disease fungus).